The sequence spans 213 residues: Imidazole glycerol phosphate synthase subunit HisH (213 aa).

One can recognise a Glutamine amidotransferase type-1 domain in the interval 4–211 (NIGLIDYGMG…LAWLKKETKD (208 aa)). The active-site Nucleophile is the Cys82. Catalysis depends on residues His186 and Glu188.

As to quaternary structure, heterodimer of HisH and HisF.

The protein resides in the cytoplasm. It carries out the reaction 5-[(5-phospho-1-deoxy-D-ribulos-1-ylimino)methylamino]-1-(5-phospho-beta-D-ribosyl)imidazole-4-carboxamide + L-glutamine = D-erythro-1-(imidazol-4-yl)glycerol 3-phosphate + 5-amino-1-(5-phospho-beta-D-ribosyl)imidazole-4-carboxamide + L-glutamate + H(+). The enzyme catalyses L-glutamine + H2O = L-glutamate + NH4(+). The protein operates within amino-acid biosynthesis; L-histidine biosynthesis; L-histidine from 5-phospho-alpha-D-ribose 1-diphosphate: step 5/9. IGPS catalyzes the conversion of PRFAR and glutamine to IGP, AICAR and glutamate. The HisH subunit catalyzes the hydrolysis of glutamine to glutamate and ammonia as part of the synthesis of IGP and AICAR. The resulting ammonia molecule is channeled to the active site of HisF. This Prochlorococcus marinus (strain SARG / CCMP1375 / SS120) protein is Imidazole glycerol phosphate synthase subunit HisH.